The following is a 206-amino-acid chain: Protein FAM228A (206 aa).

The protein belongs to the FAM228 family.

This chain is Protein FAM228A (FAM228A), found in Homo sapiens (Human).